The primary structure comprises 246 residues: Biosynthetic peptidoglycan transglycosylase (246 aa).

Residues 27–47 (VVFCFFFAVFALLLIFRFVPI) traverse the membrane as a helical segment.

The protein belongs to the glycosyltransferase 51 family.

The protein localises to the cell inner membrane. The catalysed reaction is [GlcNAc-(1-&gt;4)-Mur2Ac(oyl-L-Ala-gamma-D-Glu-L-Lys-D-Ala-D-Ala)](n)-di-trans,octa-cis-undecaprenyl diphosphate + beta-D-GlcNAc-(1-&gt;4)-Mur2Ac(oyl-L-Ala-gamma-D-Glu-L-Lys-D-Ala-D-Ala)-di-trans,octa-cis-undecaprenyl diphosphate = [GlcNAc-(1-&gt;4)-Mur2Ac(oyl-L-Ala-gamma-D-Glu-L-Lys-D-Ala-D-Ala)](n+1)-di-trans,octa-cis-undecaprenyl diphosphate + di-trans,octa-cis-undecaprenyl diphosphate + H(+). It functions in the pathway cell wall biogenesis; peptidoglycan biosynthesis. Its function is as follows. Peptidoglycan polymerase that catalyzes glycan chain elongation from lipid-linked precursors. This is Biosynthetic peptidoglycan transglycosylase from Haemophilus influenzae (strain ATCC 51907 / DSM 11121 / KW20 / Rd).